The following is a 25-amino-acid chain: Unknown protein 7 (25 aa).

A disordered region spans residues 1–25; it reads MENGKVHVASMSGLSMPHMNEMLEK.

The protein is Unknown protein 7 of Pseudotsuga menziesii (Douglas-fir).